A 372-amino-acid polypeptide reads, in one-letter code: Glutamate 5-kinase (372 aa).

Position 14 (K14) interacts with ATP. 3 residues coordinate substrate: S54, D141, and N153. Position 173-174 (T173–D174) interacts with ATP. Residues R280 to M358 form the PUA domain.

Belongs to the glutamate 5-kinase family.

Its subcellular location is the cytoplasm. The enzyme catalyses L-glutamate + ATP = L-glutamyl 5-phosphate + ADP. Its pathway is amino-acid biosynthesis; L-proline biosynthesis; L-glutamate 5-semialdehyde from L-glutamate: step 1/2. Catalyzes the transfer of a phosphate group to glutamate to form L-glutamate 5-phosphate. This Burkholderia thailandensis (strain ATCC 700388 / DSM 13276 / CCUG 48851 / CIP 106301 / E264) protein is Glutamate 5-kinase.